The following is a 202-amino-acid chain: D-alanyl-D-alanine dipeptidase (202 aa).

Positions 116 and 123 each coordinate Zn(2+). Residue E181 is the Proton donor/acceptor of the active site. H184 contributes to the Zn(2+) binding site.

It belongs to the peptidase M15D family. Zn(2+) is required as a cofactor.

It carries out the reaction D-alanyl-D-alanine + H2O = 2 D-alanine. In terms of biological role, catalyzes hydrolysis of the D-alanyl-D-alanine dipeptide. The chain is D-alanyl-D-alanine dipeptidase (vanXB) from Enterococcus faecalis (strain ATCC 700802 / V583).